The following is a 704-amino-acid chain: Glycine--tRNA ligase beta subunit (704 aa).

The protein belongs to the class-II aminoacyl-tRNA synthetase family. In terms of assembly, tetramer of two alpha and two beta subunits.

It localises to the cytoplasm. It catalyses the reaction tRNA(Gly) + glycine + ATP = glycyl-tRNA(Gly) + AMP + diphosphate. This chain is Glycine--tRNA ligase beta subunit, found in Rhizobium etli (strain ATCC 51251 / DSM 11541 / JCM 21823 / NBRC 15573 / CFN 42).